The sequence spans 501 residues: MPLVKRNIEPRHLCRGALPEGVTSELECVTNSTLAAIIRQLSSLSKHAEDIFGELFNEANNFYIRANSLQDRIDRLAVKVTQLDSTVEEVSLQDINMKKAFKSSTIQDQQVVSKNSIPNPVADIYNQSDKPPPLSILTPYRDDKKDGLKFYTDPSYFFDLWKEKMLQDTEDKRKEKRRQKEQKRVDGTTREVKKVRKARNRRQEWNMMAYDKELRPDNRLSQSVHHGASSEGSLSPDTRSHTSDVTDYSYPATPNHALQAQPATPSYTAGDAPLHGTTNQGAEHEYRPSSASARHMALNRPQQPPPPPPPQAPEGSQASTSVAPADYGMLPAQIIEYYSPSGPPPPPPPPMIPSAQTAFVSPLQMPTQPPFPASAVSTYPTPPHQPSTGLLATAPPPPGPPPPPPGPPGPSSLSSSPMHGPPVAEAKRPEPAQPPISDARSDLLAAIRMGIQLKKVQEQREQEAKREPVGNDVATILSRRIAVEYSDSDDDSEFDENDWSD.

Residues 57–93 (NEANNFYIRANSLQDRIDRLAVKVTQLDSTVEEVSLQ) are a coiled coil. Tyr-151 bears the Phosphotyrosine; by ABL1 mark. The stretch at 162 to 206 (KEKMLQDTEDKRKEKRRQKEQKRVDGTTREVKKVRKARNRRQEWN) forms a coiled coil. The tract at residues 170–443 (EDKRKEKRRQ…PPISDARSDL (274 aa)) is disordered. Positions 182–192 (QKRVDGTTREV) are enriched in basic and acidic residues. Over residues 219-237 (RLSQSVHHGASSEGSLSPD) the composition is skewed to polar residues. Phosphotyrosine; by ABL1 is present on Tyr-248. Residues 256–267 (HALQAQPATPSY) show a composition bias toward polar residues. The segment covering 302-312 (QQPPPPPPPQA) has biased composition (pro residues). Tyr-337 carries the phosphotyrosine; by ABL1 modification. Pro residues-rich tracts occupy residues 341 to 352 (SGPPPPPPPPMI) and 394 to 410 (APPPPGPPPPPPGPPGP). Residues 411–422 (SSLSSSPMHGPP) are compositionally biased toward low complexity. The 18-residue stretch at 439 to 456 (ARSDLLAAIRMGIQLKKV) folds into the WH2 domain. Tyr-485 carries the post-translational modification Phosphotyrosine; by ABL1.

The protein belongs to the SCAR/WAVE family. Binds actin and the Arp2/3 complex. In terms of processing, phosphorylation by ABL1 promotes lamellipodia formation and cell migration.

Its subcellular location is the cytoplasm. The protein localises to the cytoskeleton. In terms of biological role, downstream effector molecules involved in the transmission of signals from tyrosine kinase receptors and small GTPases to the actin cytoskeleton. Plays a role in the regulation of cell morphology and cytoskeletal organization. Required in the control of cell shape. This Mus musculus (Mouse) protein is Actin-binding protein WASF3 (Wasf3).